Here is a 534-residue protein sequence, read N- to C-terminus: CTP synthase (534 aa).

The tract at residues 1-267 (MTKYIFVTGG…DQIVCDHLKL (267 aa)) is amidoligase domain. CTP is bound at residue Ser13. Ser13 serves as a coordination point for UTP. 14–19 (SIGKGI) contributes to the ATP binding site. Tyr54 provides a ligand contact to L-glutamine. Asp71 serves as a coordination point for ATP. Residues Asp71 and Glu141 each contribute to the Mg(2+) site. CTP contacts are provided by residues 148–150 (DIE), 188–193 (KTKPTQ), and Lys224. Residues 188-193 (KTKPTQ) and Lys224 contribute to the UTP site. In terms of domain architecture, Glutamine amidotransferase type-1 spans 292-534 (KIALVGKYVE…FVTAAVENAK (243 aa)). Gly354 contributes to the L-glutamine binding site. Cys381 acts as the Nucleophile; for glutamine hydrolysis in catalysis. L-glutamine is bound by residues 382 to 385 (LGMQ), Glu405, and Arg463. Residues His508 and Glu510 contribute to the active site.

Belongs to the CTP synthase family. Homotetramer.

It catalyses the reaction UTP + L-glutamine + ATP + H2O = CTP + L-glutamate + ADP + phosphate + 2 H(+). It carries out the reaction L-glutamine + H2O = L-glutamate + NH4(+). The enzyme catalyses UTP + NH4(+) + ATP = CTP + ADP + phosphate + 2 H(+). Its pathway is pyrimidine metabolism; CTP biosynthesis via de novo pathway; CTP from UDP: step 2/2. With respect to regulation, allosterically activated by GTP, when glutamine is the substrate; GTP has no effect on the reaction when ammonia is the substrate. The allosteric effector GTP functions by stabilizing the protein conformation that binds the tetrahedral intermediate(s) formed during glutamine hydrolysis. Inhibited by the product CTP, via allosteric rather than competitive inhibition. Its function is as follows. Catalyzes the ATP-dependent amination of UTP to CTP with either L-glutamine or ammonia as the source of nitrogen. Regulates intracellular CTP levels through interactions with the four ribonucleotide triphosphates. This is CTP synthase from Streptococcus thermophilus (strain CNRZ 1066).